Consider the following 260-residue polypeptide: MSETLSVAVTDPIVQVKNLAFYYGASKALHNISQDFPRNKVTALIGPSGCGKSTLLRCLNRMNDLVDGARVEGSILLDGTEVNTPAMDVIELRRRVGMVFQKSNPFPKSIYENVIYGLRIAGVRDKAVLDQAVEQSLRSAALWDEVKDRLHESALGMSGGQMQRLCIARAIAVNPEVVLMDEPCSALDPKSTARVEELISELREKYTIIIVTHNMQQAARVSDYTAFLFEGVLVEYGVTEDLFVKPRNKQTEDYITGRFG.

Residues 14–255 (VQVKNLAFYY…PRNKQTEDYI (242 aa)) form the ABC transporter domain. An ATP-binding site is contributed by 46 to 53 (GPSGCGKS).

It belongs to the ABC transporter superfamily. Phosphate importer (TC 3.A.1.7) family. As to quaternary structure, the complex is composed of two ATP-binding proteins (PstB), two transmembrane proteins (PstC and PstA) and a solute-binding protein (PstS).

The protein resides in the cell inner membrane. It carries out the reaction phosphate(out) + ATP + H2O = ADP + 2 phosphate(in) + H(+). Its function is as follows. Part of the ABC transporter complex PstSACB involved in phosphate import. Responsible for energy coupling to the transport system. This is Phosphate import ATP-binding protein PstB from Syntrophotalea carbinolica (strain DSM 2380 / NBRC 103641 / GraBd1) (Pelobacter carbinolicus).